Here is a 62-residue protein sequence, read N- to C-terminus: UPF0434 protein Avi_4243 (62 aa).

Belongs to the UPF0434 family.

The protein is UPF0434 protein Avi_4243 of Allorhizobium ampelinum (strain ATCC BAA-846 / DSM 112012 / S4) (Agrobacterium vitis (strain S4)).